The chain runs to 310 residues: D-alanine--D-alanine ligase (310 aa).

Positions 104-305 (KRLFHSEGLP…MPQLAERILQ (202 aa)) constitute an ATP-grasp domain. 135-190 (LGDFHGAAFVKPLDSGSSVGISRAVGKDELIRGVAKALSVSHRCMVERAIEGRELT) contacts ATP. D259, E272, and N274 together coordinate Mg(2+).

This sequence belongs to the D-alanine--D-alanine ligase family. It depends on Mg(2+) as a cofactor. Requires Mn(2+) as cofactor.

The protein resides in the cytoplasm. It carries out the reaction 2 D-alanine + ATP = D-alanyl-D-alanine + ADP + phosphate + H(+). The protein operates within cell wall biogenesis; peptidoglycan biosynthesis. Its function is as follows. Cell wall formation. The protein is D-alanine--D-alanine ligase of Magnetococcus marinus (strain ATCC BAA-1437 / JCM 17883 / MC-1).